Reading from the N-terminus, the 164-residue chain is Replication restart protein DnaT (164 aa).

It belongs to the DnaT family. As to quaternary structure, homooligomerizes. Interacts with PriB. Component of the replication restart primosome. Primosome assembly occurs via a 'hand-off' mechanism. PriA binds to replication forks, subsequently PriB then DnaT bind; DnaT then displaces ssDNA to generate the helicase loading substrate.

Its function is as follows. Involved in the restart of stalled replication forks, which reloads the replicative helicase on sites other than the origin of replication. Can function in multiple replication restart pathways. Displaces ssDNA from a PriB-ssDNA complex. Probably forms a spiral filament on ssDNA. This Buchnera aphidicola subsp. Acyrthosiphon pisum (strain 5A) protein is Replication restart protein DnaT.